A 318-amino-acid chain; its full sequence is Protoheme IX farnesyltransferase (318 aa).

9 consecutive transmembrane segments (helical) span residues 31–51 (IILL…QGPL), 55–75 (LAIA…TLNC), 98–118 (IQPF…FILL), 125–145 (LAAG…THGL), 153–173 (IVIG…AVTG), 181–201 (ILFA…ALMI), 206–228 (AAVK…QILA), 238–260 (LALA…LLGL), and 285–305 (FSIF…LPGA).

Belongs to the UbiA prenyltransferase family. Protoheme IX farnesyltransferase subfamily.

It localises to the cell inner membrane. The catalysed reaction is heme b + (2E,6E)-farnesyl diphosphate + H2O = Fe(II)-heme o + diphosphate. Its pathway is porphyrin-containing compound metabolism; heme O biosynthesis; heme O from protoheme: step 1/1. Its function is as follows. Converts heme B (protoheme IX) to heme O by substitution of the vinyl group on carbon 2 of heme B porphyrin ring with a hydroxyethyl farnesyl side group. The chain is Protoheme IX farnesyltransferase from Synechococcus elongatus (strain ATCC 33912 / PCC 7942 / FACHB-805) (Anacystis nidulans R2).